We begin with the raw amino-acid sequence, 79 residues long: Sperm-specific basic nuclear protein SP4 (79 aa).

The tract at residues 1-79 (MSKVSGGSRR…ARDYGSDYRS (79 aa)) is disordered. Basic residues predominate over residues 9–60 (RRTRARRPMSNRRGRRSQSAAHRSRAQRRRRRTGTTRRARTSTARRARTRTA). Repeats lie at residues 45 to 52 (RRARTSTA) and 53 to 60 (RRARTRTA). Residues 61–79 (RRSDLTRMMARDYGSDYRS) show a composition bias toward basic and acidic residues.

It is found in the nucleus. The sequence is that of Sperm-specific basic nuclear protein SP4 (sp4-a) from Xenopus laevis (African clawed frog).